A 255-amino-acid chain; its full sequence is Imidazole glycerol phosphate synthase subunit HisF (255 aa).

Residues Asp11 and Asp130 contribute to the active site.

This sequence belongs to the HisA/HisF family. As to quaternary structure, heterodimer of HisH and HisF.

The protein localises to the cytoplasm. It catalyses the reaction 5-[(5-phospho-1-deoxy-D-ribulos-1-ylimino)methylamino]-1-(5-phospho-beta-D-ribosyl)imidazole-4-carboxamide + L-glutamine = D-erythro-1-(imidazol-4-yl)glycerol 3-phosphate + 5-amino-1-(5-phospho-beta-D-ribosyl)imidazole-4-carboxamide + L-glutamate + H(+). It participates in amino-acid biosynthesis; L-histidine biosynthesis; L-histidine from 5-phospho-alpha-D-ribose 1-diphosphate: step 5/9. Its function is as follows. IGPS catalyzes the conversion of PRFAR and glutamine to IGP, AICAR and glutamate. The HisF subunit catalyzes the cyclization activity that produces IGP and AICAR from PRFAR using the ammonia provided by the HisH subunit. The protein is Imidazole glycerol phosphate synthase subunit HisF of Campylobacter jejuni subsp. jejuni serotype O:6 (strain 81116 / NCTC 11828).